The chain runs to 1334 residues: MFSLISLSHEESAESANKYVWRVSLWVESERQTPPSEVFLPFFRVEYMKVRKVSIVVLVLTLFIIPVIIPPAHSSINTSTTYATAYVGETSISSEPFILDVANLPWLNPQGSNIRFFEYSNLTGQLYAYEQLFSKTTWTVNTVESTGWETLPYWQNGQLVFNCPSAPHGGQYIAWRYTPSSNTFNVTIHITSWPSGINNPYSPGIAIYSPTVGDQPTDIGTSGFLALLVTFNGQIWYHETNGNWVELSVVYPTPSTAYPFTFTVTFTENSAGNVTVSTVYINSTAYTVNVNTPFPWSQIGYVGIRGDIDNLFYVSYFAVSPSPFVNSVESTDWKTLPYWQNGELVINGTGASAGGQYIAWRFTPSSNTFNVTIHITSWPSGISGGTYPGIEIFSPNVGNQPYAQASGFLALLVTFNGNIWYHGISGISGCDLLKSSAYPTPSTAYPFTFTVTFTENSAGNVTVSTVYINSTAHTVNLNTPFPWSQIGYIGITSCYDLFYVSYFAVSPSPFVNSVESTDWKTLPYWQNGQLVFNVTGASGSQYIAWRYTPVGNTINVTIHITSFPSGIPSGDNPGIEIFSPNVGDQPYDEVSGFLSLLVAFNGNIWYHGLNGFVLLKSSAFPTPSTAYPFTFTVTFTENSAGNVTVSTVYINSTAYTLNFNTPFPWSQIGYIGIRGDPSNLFYVSYFSTTQQLYAYELVTNPYTNTPYTGTVYMAIFPYPISYDVYVSQAPIVYSQATLPLVTVSSPSQVTTQYPIISTSTYMVIPSIGAYSGNTPLFLYPQMAVSEGIVPVIPMVESTSWKTLPYWQNGQLVLDVAAACSSQYVAWRYTPSSNTMNVTIHITSYPSGIQYNPGISIYSPNIGDQPYDYASGFLALLVTFSGNIWYHGTNANWVELRSSAYPTPSTAYPFTFTVTFTENSAGNVTISTVYINSTAYTLNVNTPFPWSQIGYVAIRVDTQNLFYVSYFSISQGSSPFVLVSPSYAQGFVGSQYAYPYFMNTTTVLVNNTAVPKGLSVFSGYMPGANTVFSTFLYMNTTPQSPVLVLMPAPYVSFNALSNGFSITADAQILSLYGYPATYTNPSFTYTPPGIIGMSGTNTFTFKGAQTQLSASTTPPSSTTPTPPSSSSSSSSSSSISTSPNTIQVVLNGSVYVHVPLLFHPALSTPNGSVLFSTSVNSTGVYISSYVTSAITTPLNVTIEYTNGTVIKSFTIEPGQTFQVPLVNGDENVIISYGNHTVTIPISANNVNVLSLRNAISAVLPPIYALPLFLLFAGSFFISLAVRSVPKFAGMGSIIYIFFVAPFLIVIGIPTSVVYGTVVGALIIIIIGLWASRSQD.

A helical transmembrane segment spans residues 53–73 (VSIVVLVLTLFIIPVIIPPAH). The interval 1107–1135 (LSASTTPPSSTTPTPPSSSSSSSSSSSIS) is disordered. Low complexity predominate over residues 1110–1135 (STTPPSSTTPTPPSSSSSSSSSSSIS). Transmembrane regions (helical) follow at residues 1256-1276 (AVLP…SFFI), 1292-1312 (IIYI…TSVV), and 1313-1333 (YGTV…SRSQ).

The protein resides in the host membrane. This Acidianus two-tailed virus (ATV) protein is Putative transmembrane protein ORF1334.